The chain runs to 281 residues: Cell division protein DivIB (281 aa).

The disordered stretch occupies residues 1–36; the sequence is MARKRITRRDPEEELSKFLRHEPGQGQETRKLSSQL. The Cytoplasmic segment spans residues 1–46; it reads MARKRITRRDPEEELSKFLRHEPGQGQETRKLSSQLTSLKKERRRG. The segment covering 8–31 has biased composition (basic and acidic residues); sequence RRDPEEELSKFLRHEPGQGQETRK. The helical transmembrane segment at 47–69 threads the bilayer; sequence LLTRLGSIMAVCLLAIAFLTYYV. Residues 70–281 lie on the Extracellular side of the membrane; it reads SPLADVSTVR…SAEKKAYGLS (212 aa). Positions 73-144 constitute a POTRA domain; that stretch reads ADVSTVRVLG…NTLNMQVHER (72 aa).

The protein belongs to the FtsQ/DivIB family. DivIB subfamily.

Its subcellular location is the cell membrane. Its function is as follows. Cell division protein that may be involved in stabilizing or promoting the assembly of the division complex. This is Cell division protein DivIB from Lactobacillus delbrueckii subsp. bulgaricus (strain ATCC 11842 / DSM 20081 / BCRC 10696 / JCM 1002 / NBRC 13953 / NCIMB 11778 / NCTC 12712 / WDCM 00102 / Lb 14).